The sequence spans 259 residues: UPF0246 protein VF_2109 (259 aa).

This sequence belongs to the UPF0246 family.

This Aliivibrio fischeri (strain ATCC 700601 / ES114) (Vibrio fischeri) protein is UPF0246 protein VF_2109.